A 346-amino-acid polypeptide reads, in one-letter code: tRNA N6-adenosine threonylcarbamoyltransferase (346 aa).

3 residues coordinate a divalent metal cation: H120, H124, and Y141. Residues 141-145 (YVSGG), D173, G188, E192, and N277 contribute to the substrate site. D305 is a binding site for a divalent metal cation.

Belongs to the KAE1 / TsaD family. In terms of assembly, component of the EKC/KEOPS complex composed of at least BUD32, CGI121, GON7, KAE1 and PCC1; the whole complex dimerizes. The cofactor is a divalent metal cation.

Its subcellular location is the cytoplasm. The protein resides in the nucleus. The enzyme catalyses L-threonylcarbamoyladenylate + adenosine(37) in tRNA = N(6)-L-threonylcarbamoyladenosine(37) in tRNA + AMP + H(+). In terms of biological role, component of the EKC/KEOPS complex that is required for the formation of a threonylcarbamoyl group on adenosine at position 37 (t(6)A37) in tRNAs that read codons beginning with adenine. The complex is probably involved in the transfer of the threonylcarbamoyl moiety of threonylcarbamoyl-AMP (TC-AMP) to the N6 group of A37. KAE1 likely plays a direct catalytic role in this reaction, but requires other protein(s) of the complex to fulfill this activity. The EKC/KEOPS complex also promotes both telomere uncapping and telomere elongation. The complex is required for efficient recruitment of transcriptional coactivators. The chain is tRNA N6-adenosine threonylcarbamoyltransferase from Gibberella zeae (strain ATCC MYA-4620 / CBS 123657 / FGSC 9075 / NRRL 31084 / PH-1) (Wheat head blight fungus).